The chain runs to 31 residues: Cyclotide mden-K (31 aa).

Residues 1-31 (GSIPCGESCVWIPCISSVVGCACKNKVCYKN) constitute a cross-link (cyclopeptide (Gly-Asn)). 3 cysteine pairs are disulfide-bonded: C5/C21, C9/C23, and C14/C28.

Belongs to the cyclotide family. Bracelet subfamily. In terms of processing, this is a cyclic peptide.

Probably participates in a plant defense mechanism. This is Cyclotide mden-K from Melicytus dentatus (Tree violet).